The primary structure comprises 61 residues: Small ribosomal subunit protein uS14B (61 aa).

Positions 24, 27, 40, and 43 each coordinate Zn(2+).

The protein belongs to the universal ribosomal protein uS14 family. Zinc-binding uS14 subfamily. In terms of assembly, part of the 30S ribosomal subunit. Contacts proteins S3 and S10. The cofactor is Zn(2+).

Its function is as follows. Binds 16S rRNA, required for the assembly of 30S particles and may also be responsible for determining the conformation of the 16S rRNA at the A site. This is Small ribosomal subunit protein uS14B from Saccharopolyspora erythraea (strain ATCC 11635 / DSM 40517 / JCM 4748 / NBRC 13426 / NCIMB 8594 / NRRL 2338).